The sequence spans 330 residues: Clavaminate synthase-like protein At3g21360 (330 aa).

Alanine 2 carries the post-translational modification N-acetylalanine. Fe cation is bound by residues histidine 120, glutamate 122, and histidine 313.

Fe cation serves as cofactor.

The protein is Clavaminate synthase-like protein At3g21360 of Arabidopsis thaliana (Mouse-ear cress).